The primary structure comprises 546 residues: Chaperonin GroEL (546 aa).

ATP-binding positions include 30–33, Lys51, 87–91, Gly415, and Asp495; these read TLGP and DGTTT.

The protein belongs to the chaperonin (HSP60) family. As to quaternary structure, forms a cylinder of 14 subunits composed of two heptameric rings stacked back-to-back. Interacts with the co-chaperonin GroES.

It localises to the cytoplasm. The catalysed reaction is ATP + H2O + a folded polypeptide = ADP + phosphate + an unfolded polypeptide.. Functionally, together with its co-chaperonin GroES, plays an essential role in assisting protein folding. The GroEL-GroES system forms a nano-cage that allows encapsulation of the non-native substrate proteins and provides a physical environment optimized to promote and accelerate protein folding. This is Chaperonin GroEL from Brucella ovis (strain ATCC 25840 / 63/290 / NCTC 10512).